The sequence spans 624 residues: (-)-beta-phellandrene synthase 2, chloroplastic (624 aa).

The N-terminal 47 residues, 1–47 (MALVSVAPLVSMRRSLFSSPYELKSIDKTIPNLVMCRKRMLGRPSIR), are a transit peptide targeting the chloroplast. Mg(2+)-binding residues include aspartate 375, aspartate 379, and aspartate 527. The DDXXD motif motif lies at 375 to 379 (DDIYD).

Belongs to the terpene synthase family. Tpsd subfamily. Mg(2+) is required as a cofactor. Requires Mn(2+) as cofactor.

It is found in the plastid. The protein resides in the chloroplast. The catalysed reaction is (2E)-geranyl diphosphate = (-)-beta-phellandrene + diphosphate. The protein operates within terpene metabolism; oleoresin biosynthesis. Its pathway is secondary metabolite biosynthesis; terpenoid biosynthesis. Functionally, monoterpene synthase (TPS) involved in the biosynthesis of monoterpene natural products included in conifer oleoresin secretions and volatile emissions; these compounds contribute to biotic and abiotic stress defense against herbivores and pathogens. Catalyzes the conversion of (2E)-geranyl diphosphate (GPP) to (-)-beta-phellandrene. This is (-)-beta-phellandrene synthase 2, chloroplastic from Pinus contorta (Shore pine).